Consider the following 196-residue polypeptide: uncharacterized protein (196 aa).

This is an uncharacterized protein from Caenorhabditis elegans.